An 879-amino-acid polypeptide reads, in one-letter code: Alanine--tRNA ligase (879 aa).

4 residues coordinate Zn(2+): H566, H570, C668, and H672.

The protein belongs to the class-II aminoacyl-tRNA synthetase family. Requires Zn(2+) as cofactor.

It localises to the cytoplasm. The catalysed reaction is tRNA(Ala) + L-alanine + ATP = L-alanyl-tRNA(Ala) + AMP + diphosphate. Functionally, catalyzes the attachment of alanine to tRNA(Ala) in a two-step reaction: alanine is first activated by ATP to form Ala-AMP and then transferred to the acceptor end of tRNA(Ala). Also edits incorrectly charged Ser-tRNA(Ala) and Gly-tRNA(Ala) via its editing domain. The protein is Alanine--tRNA ligase of Halalkalibacterium halodurans (strain ATCC BAA-125 / DSM 18197 / FERM 7344 / JCM 9153 / C-125) (Bacillus halodurans).